A 446-amino-acid polypeptide reads, in one-letter code: Serum factor response D (446 aa).

In terms of domain architecture, MADS-box spans 1–61 (MGRKKIKIQR…PNAKEKYFQY (61 aa)). 3 disordered regions span residues 95–195 (KKEK…FNSS), 210–296 (TQEN…CQQV), and 319–432 (CSSP…SNLN). Positions 112-121 (SHSEEEDHKS) are enriched in basic and acidic residues. Basic residues predominate over residues 133–142 (HHNHHHHHHQ). 2 stretches are compositionally biased toward low complexity: residues 143–195 (YNNN…FNSS) and 216–282 (HYNN…NNNN). The span at 322–355 (PEDTSPMTSPRTPPFSSTNTNTLQTSPNSQQKSK) shows a compositional bias: polar residues. Residues 365–432 (NNNQNNNNQN…SPTSSSSNLN (68 aa)) show a composition bias toward low complexity.

It is found in the nucleus. The sequence is that of Serum factor response D (srfD) from Dictyostelium discoideum (Social amoeba).